Consider the following 350-residue polypeptide: S-adenosylmethionine:tRNA ribosyltransferase-isomerase (350 aa).

It belongs to the QueA family. As to quaternary structure, monomer.

It is found in the cytoplasm. The enzyme catalyses 7-aminomethyl-7-carbaguanosine(34) in tRNA + S-adenosyl-L-methionine = epoxyqueuosine(34) in tRNA + adenine + L-methionine + 2 H(+). The protein operates within tRNA modification; tRNA-queuosine biosynthesis. In terms of biological role, transfers and isomerizes the ribose moiety from AdoMet to the 7-aminomethyl group of 7-deazaguanine (preQ1-tRNA) to give epoxyqueuosine (oQ-tRNA). This is S-adenosylmethionine:tRNA ribosyltransferase-isomerase from Bacillus cereus (strain G9842).